Here is a 459-residue protein sequence, read N- to C-terminus: tRNA modification GTPase MnmE (459 aa).

Arg22, Glu85, and Arg124 together coordinate (6S)-5-formyl-5,6,7,8-tetrahydrofolate. The TrmE-type G domain maps to 221–380 (GLSTVIVGKP…LEIQIRDLFF (160 aa)). Asn231 serves as a coordination point for K(+). GTP-binding positions include 231–236 (NVGKSS), 250–256 (TEVAGTT), and 275–278 (DTAG). Residue Ser235 participates in Mg(2+) binding. Positions 250, 252, and 255 each coordinate K(+). Thr256 contacts Mg(2+). Lys459 is a binding site for (6S)-5-formyl-5,6,7,8-tetrahydrofolate.

It belongs to the TRAFAC class TrmE-Era-EngA-EngB-Septin-like GTPase superfamily. TrmE GTPase family. In terms of assembly, homodimer. Heterotetramer of two MnmE and two MnmG subunits. It depends on K(+) as a cofactor.

The protein localises to the cytoplasm. Its function is as follows. Exhibits a very high intrinsic GTPase hydrolysis rate. Involved in the addition of a carboxymethylaminomethyl (cmnm) group at the wobble position (U34) of certain tRNAs, forming tRNA-cmnm(5)s(2)U34. The sequence is that of tRNA modification GTPase MnmE from Staphylococcus aureus (strain MSSA476).